Here is a 192-residue protein sequence, read N- to C-terminus: uncharacterized protein (192 aa).

Residues 17-73 are disordered; it reads MLRGSGKKPIQRLAKAPAATASSKTSEWRATTAYGFLPAGGDVRPHSPRYESQGVLS. Over residues 30-41 the composition is skewed to low complexity; that stretch reads AKAPAATASSKT.

This is an uncharacterized protein from Sinorhizobium fredii (strain NBRC 101917 / NGR234).